Here is a 265-residue protein sequence, read N- to C-terminus: Synaptoporin (265 aa).

Residues 1-4 (MCMV) lie on the Cytoplasmic side of the membrane. Residues 1–202 (MCMVIFAPLF…NIWFVFKETG (202 aa)) enclose the MARVEL domain. A helical membrane pass occupies residues 5–25 (IFAPLFAIFAFATCGGYSGGL). The Vesicular segment spans residues 26-81 (RLSVDCVNKTESNLSIDIAFAYPFRLHQVTFEVPTCEGKERQKLALIGDSSSSAEF). N-linked (GlcNAc...) asparagine glycosylation is found at Asn-33 and Asn-38. Residues 82–102 (FVTVAVFAFLYSLAATVVYIF) form a helical membrane-spanning segment. Topologically, residues 103-114 (FQNKYRENNRGP) are cytoplasmic. Residues 115-135 (LIDFIVTVVFSFLWLVGSSAW) form a helical membrane-spanning segment. The Vesicular segment spans residues 136-177 (AKGLSDVKVATDPKEVLLLMSACKQPSNKCMAIHSPVMSSLN). A helical transmembrane segment spans residues 178–198 (TSVVFGFLNFILWAGNIWFVF). Residues 199–265 (KETGWHSSGQ…TGPTSFTNQI (67 aa)) lie on the Cytoplasmic side of the membrane. A run of 5 repeats spans residues 210–214 (YLSDP), 222–226 (YNQGG), 227–231 (YNQDS), 232–236 (YGSSS), and 238–242 (YSQQA). A 5 X approximate repeats region spans residues 210 to 242 (YLSDPMEKHSSSYNQGGYNQDSYGSSSGYSQQA). Position 212 is a phosphoserine (Ser-212). Residues 221 to 265 (SYNQGGYNQDSYGSSSGYSQQASLGPTSDEFGQQPTGPTSFTNQI) are disordered. Residues 224 to 243 (QGGYNQDSYGSSSGYSQQAS) show a composition bias toward low complexity. Polar residues predominate over residues 244–265 (LGPTSDEFGQQPTGPTSFTNQI).

The protein belongs to the synaptophysin/synaptobrevin family.

The protein resides in the cytoplasmic vesicle. It localises to the secretory vesicle. The protein localises to the synaptic vesicle membrane. Its subcellular location is the synapse. It is found in the synaptosome. Its function is as follows. Intrinsic membrane protein of small synaptic vesicles. Probable vesicular channel protein. This chain is Synaptoporin (SYNPR), found in Homo sapiens (Human).